We begin with the raw amino-acid sequence, 943 residues long: Isoleucine--tRNA ligase (943 aa).

The 'HIGH' region motif lies at 58 to 68; sequence PYANGNIHIGH. Position 567 (glutamate 567) interacts with L-isoleucyl-5'-AMP. The short motif at 608-612 is the 'KMSKS' region element; sequence KMSKS. Lysine 611 is an ATP binding site. 4 residues coordinate Zn(2+): cysteine 906, cysteine 909, cysteine 926, and cysteine 929.

The protein belongs to the class-I aminoacyl-tRNA synthetase family. IleS type 1 subfamily. In terms of assembly, monomer. Zn(2+) is required as a cofactor.

The protein resides in the cytoplasm. It carries out the reaction tRNA(Ile) + L-isoleucine + ATP = L-isoleucyl-tRNA(Ile) + AMP + diphosphate. Its function is as follows. Catalyzes the attachment of isoleucine to tRNA(Ile). As IleRS can inadvertently accommodate and process structurally similar amino acids such as valine, to avoid such errors it has two additional distinct tRNA(Ile)-dependent editing activities. One activity is designated as 'pretransfer' editing and involves the hydrolysis of activated Val-AMP. The other activity is designated 'posttransfer' editing and involves deacylation of mischarged Val-tRNA(Ile). In Pseudomonas savastanoi pv. phaseolicola (strain 1448A / Race 6) (Pseudomonas syringae pv. phaseolicola (strain 1448A / Race 6)), this protein is Isoleucine--tRNA ligase.